A 271-amino-acid chain; its full sequence is Type III pantothenate kinase (271 aa).

6 to 13 contacts ATP; that stretch reads DVRNTNIV. 109 to 112 is a substrate binding site; it reads GADR. Aspartate 111 serves as the catalytic Proton acceptor. Aspartate 131 serves as a coordination point for K(+). Threonine 134 serves as a coordination point for ATP. Position 186 (threonine 186) interacts with substrate.

Belongs to the type III pantothenate kinase family. Homodimer. NH4(+) is required as a cofactor. K(+) serves as cofactor.

Its subcellular location is the cytoplasm. It carries out the reaction (R)-pantothenate + ATP = (R)-4'-phosphopantothenate + ADP + H(+). It functions in the pathway cofactor biosynthesis; coenzyme A biosynthesis; CoA from (R)-pantothenate: step 1/5. Catalyzes the phosphorylation of pantothenate (Pan), the first step in CoA biosynthesis. The polypeptide is Type III pantothenate kinase (Rhodococcus erythropolis (strain PR4 / NBRC 100887)).